The chain runs to 306 residues: 4-diphosphocytidyl-2-C-methyl-D-erythritol kinase (306 aa).

The active site involves K11. 98–108 lines the ATP pocket; it reads PIAGGMGGGSA. The active site involves D140.

It belongs to the GHMP kinase family. IspE subfamily.

The catalysed reaction is 4-CDP-2-C-methyl-D-erythritol + ATP = 4-CDP-2-C-methyl-D-erythritol 2-phosphate + ADP + H(+). The protein operates within isoprenoid biosynthesis; isopentenyl diphosphate biosynthesis via DXP pathway; isopentenyl diphosphate from 1-deoxy-D-xylulose 5-phosphate: step 3/6. Functionally, catalyzes the phosphorylation of the position 2 hydroxy group of 4-diphosphocytidyl-2C-methyl-D-erythritol. This Leifsonia xyli subsp. xyli (strain CTCB07) protein is 4-diphosphocytidyl-2-C-methyl-D-erythritol kinase.